A 431-amino-acid polypeptide reads, in one-letter code: Trigger factor (431 aa).

Residues 165-250 (GDTVVIDFDG…IHELKRKELP (86 aa)) enclose the PPIase FKBP-type domain.

This sequence belongs to the FKBP-type PPIase family. Tig subfamily.

It is found in the cytoplasm. It catalyses the reaction [protein]-peptidylproline (omega=180) = [protein]-peptidylproline (omega=0). Its function is as follows. Involved in protein export. Acts as a chaperone by maintaining the newly synthesized protein in an open conformation. Functions as a peptidyl-prolyl cis-trans isomerase. This Leuconostoc mesenteroides subsp. mesenteroides (strain ATCC 8293 / DSM 20343 / BCRC 11652 / CCM 1803 / JCM 6124 / NCDO 523 / NBRC 100496 / NCIMB 8023 / NCTC 12954 / NRRL B-1118 / 37Y) protein is Trigger factor.